Consider the following 275-residue polypeptide: 4-hydroxy-tetrahydrodipicolinate reductase (275 aa).

NAD(+)-binding positions include 8 to 13 (GATGRM), 100 to 102 (GTT), and 126 to 129 (SPNM). Catalysis depends on His-160, which acts as the Proton donor/acceptor. His-161 contributes to the (S)-2,3,4,5-tetrahydrodipicolinate binding site. The Proton donor role is filled by Lys-164. Residue 170–171 (GT) participates in (S)-2,3,4,5-tetrahydrodipicolinate binding.

The protein belongs to the DapB family.

The protein localises to the cytoplasm. It catalyses the reaction (S)-2,3,4,5-tetrahydrodipicolinate + NAD(+) + H2O = (2S,4S)-4-hydroxy-2,3,4,5-tetrahydrodipicolinate + NADH + H(+). The catalysed reaction is (S)-2,3,4,5-tetrahydrodipicolinate + NADP(+) + H2O = (2S,4S)-4-hydroxy-2,3,4,5-tetrahydrodipicolinate + NADPH + H(+). Its pathway is amino-acid biosynthesis; L-lysine biosynthesis via DAP pathway; (S)-tetrahydrodipicolinate from L-aspartate: step 4/4. Catalyzes the conversion of 4-hydroxy-tetrahydrodipicolinate (HTPA) to tetrahydrodipicolinate. This Methanopyrus kandleri (strain AV19 / DSM 6324 / JCM 9639 / NBRC 100938) protein is 4-hydroxy-tetrahydrodipicolinate reductase.